The sequence spans 369 residues: Probable dual-specificity RNA methyltransferase RlmN (369 aa).

Catalysis depends on Glu-98, which acts as the Proton acceptor. Positions 106–341 (STSRNTLCIS…VTVRKSRGAD (236 aa)) constitute a Radical SAM core domain. A disulfide bridge connects residues Cys-113 and Cys-346. [4Fe-4S] cluster is bound by residues Cys-120, Cys-124, and Cys-127. S-adenosyl-L-methionine contacts are provided by residues 171-172 (GE), Ser-204, 227-229 (SLH), and Asn-303. The active-site S-methylcysteine intermediate is the Cys-346.

The protein belongs to the radical SAM superfamily. RlmN family. Requires [4Fe-4S] cluster as cofactor.

Its subcellular location is the cytoplasm. It catalyses the reaction adenosine(2503) in 23S rRNA + 2 reduced [2Fe-2S]-[ferredoxin] + 2 S-adenosyl-L-methionine = 2-methyladenosine(2503) in 23S rRNA + 5'-deoxyadenosine + L-methionine + 2 oxidized [2Fe-2S]-[ferredoxin] + S-adenosyl-L-homocysteine. It carries out the reaction adenosine(37) in tRNA + 2 reduced [2Fe-2S]-[ferredoxin] + 2 S-adenosyl-L-methionine = 2-methyladenosine(37) in tRNA + 5'-deoxyadenosine + L-methionine + 2 oxidized [2Fe-2S]-[ferredoxin] + S-adenosyl-L-homocysteine. Its function is as follows. Specifically methylates position 2 of adenine 2503 in 23S rRNA and position 2 of adenine 37 in tRNAs. The polypeptide is Probable dual-specificity RNA methyltransferase RlmN (Chloroherpeton thalassium (strain ATCC 35110 / GB-78)).